The primary structure comprises 84 residues: Fulditoxin (84 aa).

An N-terminal signal peptide occupies residues 1–21 (MKTLLLTLVVVTIVCLDLGNS). Cystine bridges form between Cys24–Cys41, Cys34–Cys59, Cys63–Cys71, and Cys72–Cys77. His50 is a binding site for Zn(2+).

The protein belongs to the three-finger toxin family. Short-chain subfamily. Homodimer; non-covalently linked. Is able to form a tetramer of dimers in the presence of 2 zinc ions. As to expression, expressed by the venom gland.

It is found in the secreted. In terms of biological role, postsynaptic neurotoxin that produces potent, and completely reversible, postsynaptic neuromuscular blockade, as well as broad spectrum inhibition of human muscle and neuronal nicotinic acetylcholine receptors (nAChRs). Inhibition is potent or moderate, depending on the receptor (alpha-1-beta-1-delta-epsilon/CHRNA1-CHRNB1-CHRND-CHRNE (IC(50)=2.56 uM), alpha-4-beta-2/CHRNA4-CHRNB2 (IC(50)=1.8 uM), alpha-7/CHRNA7 (IC(50)=7 uM), and alpha-3-beta-2/CHRNA3-CHRNB2 (IC(50)=12.6 uM)). Acts as a competitive antagonist of ACh. Binds to chicken muscle-type nicotinic acetylcholine receptor (AChR) with high potency compared with the cloned human receptor. Unlike short-chain alpha-3FTxs that only bind to muscle nAChRs, this toxin utilizes dimerization to expand its pharmacological targets to block neuronal nAChRs. This is Fulditoxin from Micrurus fulvius (Eastern coral snake).